Reading from the N-terminus, the 804-residue chain is Endoplasmin (804 aa).

The N-terminal stretch at 1–21 is a signal peptide; that stretch reads MRALWVLGLCCVLLTFGSVRA. The SRT pseudosubstrate motif motif lies at 42-44; that stretch reads SRT. N62 carries N-linked (GlcNAc...) asparagine glycosylation. Position 64 is a phosphoserine (S64). N107 carries N-linked (GlcNAc...) asparagine glycosylation. N107, D149, and N162 together coordinate ATP. Position 168 is an N6-(2-hydroxyisobutyryl)lysine (K168). S172 carries the phosphoserine modification. F199 is a binding site for ATP. A glycan (N-linked (GlcNAc...) asparagine) is linked at N217. The interval 288 to 323 is disordered; that stretch reads TVEEPAEEEEAAKEDKEESDDEAAVEEEEDEKKPKT. A compositionally biased stretch (acidic residues) spans 289-317; it reads VEEPAEEEEAAKEDKEESDDEAAVEEEED. Residues S306 and S403 each carry the phosphoserine modification. The residue at position 404 (K404) is an N6-succinyllysine. N445 carries an N-linked (GlcNAc...) asparagine glycan. Position 447 is a phosphoserine (S447). K479 bears the N6-acetyllysine mark. 2 N-linked (GlcNAc...) asparagine glycosylation sites follow: N481 and N502. The residue at position 633 (K633) is an N6-succinyllysine. Positions 750–804 are disordered; sequence DPDAKVEEEPEEEPEETTEDTAEDTEQDEEEEMDAGTDEEEQETAEKSTAEKDEL. Over residues 757-792 the composition is skewed to acidic residues; the sequence is EEPEEEPEETTEDTAEDTEQDEEEEMDAGTDEEEQE. The residue at position 786 (T786) is a Phosphothreonine. Residues 793–804 are compositionally biased toward basic and acidic residues; that stretch reads TAEKSTAEKDEL. Positions 801–804 match the Prevents secretion from ER motif; sequence KDEL.

The protein belongs to the heat shock protein 90 family. As to quaternary structure, homodimer; disulfide-linked. Component of an EIF2 complex at least composed of CELF1/CUGBP1, CALR, CALR3, EIF2S1, EIF2S2, HSP90B1 and HSPA5. Part of a large chaperone multiprotein complex comprising DNAJB11, HSP90B1, HSPA5, HYOU, PDIA2, PDIA4, PDIA6, PPIB, SDF2L1, UGGT1 and very small amounts of ERP29, but not, or at very low levels, CALR nor CANX. Interacts with AIMP1; regulates its retention in the endoplasmic reticulum. Hyperglycosylated form interacts with OS9; promoting its degradation by the endoplasmic reticulum associated degradation (ERAD). Interacts with CNPY3. This interaction is disrupted in the presence of ATP. Interacts with TLR4 and TLR9, but not with TLR3. Interacts with MZB1 in a calcium-dependent manner. Interacts with METTL23. Interacts with IL1B; the interaction facilitates cargo translocation into the ERGIC. Interacts with EIF2AK3. Post-translationally, phosphorylated by CK2. N-glycosylated cotranslationally at Asn-217 by STT3A-containing OST-A complex: this glycosylation is constitutive. In response to various stress, 5 additional facultative sites (Asn-62, Asn-107, Asn-445, Asn-481 and Asn-502) can be glycosylated post-translationally by STT3B-containing OST-B complex, leading to a hyperglycosylated form that is degraded by the ER-associated degradation (ERAD) pathway. In normal conditions, the OST-A complex together with CCDC134 prevent glycosylation at facultative sites during protein folding, thereby preventing hyperglycosylation. Mechanistically, nascent HSP90B1 is tethered during translation to a specialized CCDC134-containing translocon that forms a microenvironment for its folding, in which STT3A associates with the SRT pseudosubstrate motif, and prevents access to facultative glycosylation sites until folding is completed, rendering its facultative sites inaccessible to the OST-B complex.

It localises to the endoplasmic reticulum lumen. The protein resides in the sarcoplasmic reticulum lumen. Its subcellular location is the melanosome. The enzyme catalyses ATP + H2O = ADP + phosphate + H(+). Its function is as follows. ATP-dependent chaperone involved in the processing of proteins in the endoplasmic reticulum, regulating their transport. Together with MESD, acts as a modulator of the Wnt pathway by promoting the folding of LRP6, a coreceptor of the canonical Wnt pathway. When associated with CNPY3, required for proper folding of Toll-like receptors. Promotes folding and trafficking of TLR4 to the cell surface. May participate in the unfolding of cytosolic leaderless cargos (lacking the secretion signal sequence) such as the interleukin 1/IL-1 to facilitate their translocation into the ERGIC (endoplasmic reticulum-Golgi intermediate compartment) and secretion; the translocation process is mediated by the cargo receptor TMED10. In Bos taurus (Bovine), this protein is Endoplasmin (HSP90B1).